The following is a 187-amino-acid chain: ATP synthase subunit b 2 (187 aa).

The chain crosses the membrane as a helical span at residues 39–61; it reads SQLVWLVLSFAALYLLMSRVALP.

The protein belongs to the ATPase B chain family. In terms of assembly, F-type ATPases have 2 components, F(1) - the catalytic core - and F(0) - the membrane proton channel. F(1) has five subunits: alpha(3), beta(3), gamma(1), delta(1), epsilon(1). F(0) has three main subunits: a(1), b(2) and c(10-14). The alpha and beta chains form an alternating ring which encloses part of the gamma chain. F(1) is attached to F(0) by a central stalk formed by the gamma and epsilon chains, while a peripheral stalk is formed by the delta and b chains.

The protein resides in the cell inner membrane. Its function is as follows. F(1)F(0) ATP synthase produces ATP from ADP in the presence of a proton or sodium gradient. F-type ATPases consist of two structural domains, F(1) containing the extramembraneous catalytic core and F(0) containing the membrane proton channel, linked together by a central stalk and a peripheral stalk. During catalysis, ATP synthesis in the catalytic domain of F(1) is coupled via a rotary mechanism of the central stalk subunits to proton translocation. Functionally, component of the F(0) channel, it forms part of the peripheral stalk, linking F(1) to F(0). In Parvibaculum lavamentivorans (strain DS-1 / DSM 13023 / NCIMB 13966), this protein is ATP synthase subunit b 2.